The chain runs to 957 residues: Valine--tRNA ligase (957 aa).

Positions 45–55 match the 'HIGH' region motif; the sequence is PNVTGSLHMGH. Residues 571 to 575 carry the 'KMSKS' region motif; that stretch reads KMSKS. Lysine 574 is an ATP binding site. The stretch at 887–946 forms a coiled coil; sequence VVDFAAEQARLEKELGKAEADIKRAEAKLANEKFVANAAEEVVEEEREKREAAVARKVKI.

This sequence belongs to the class-I aminoacyl-tRNA synthetase family. ValS type 1 subfamily. Monomer.

The protein localises to the cytoplasm. The catalysed reaction is tRNA(Val) + L-valine + ATP = L-valyl-tRNA(Val) + AMP + diphosphate. In terms of biological role, catalyzes the attachment of valine to tRNA(Val). As ValRS can inadvertently accommodate and process structurally similar amino acids such as threonine, to avoid such errors, it has a 'posttransfer' editing activity that hydrolyzes mischarged Thr-tRNA(Val) in a tRNA-dependent manner. The polypeptide is Valine--tRNA ligase (Rhodopseudomonas palustris (strain ATCC BAA-98 / CGA009)).